Here is a 164-residue protein sequence, read N- to C-terminus: Glutamate uptake regulatory protein (164 aa).

The region spanning 5 to 66 (LDDFDIKILD…LLDPQKIGLG (62 aa)) is the HTH asnC-type domain. Positions 24–43 (MAELSEKTGLSANACWRRIR) form a DNA-binding region, H-T-H motif.

Functionally, represses the secondary, H(+)-coupled glutamate uptake system (Gluemp) genes. The polypeptide is Glutamate uptake regulatory protein (grp) (Zymomonas mobilis subsp. mobilis (strain ATCC 31821 / ZM4 / CP4)).